A 62-amino-acid polypeptide reads, in one-letter code: GLAYATGLGYSAPLAYSGLYGGYGYGYPGYAGYYGYGGLGYRSLGYSGLGYSGLGYYGGYHY.

Its function is as follows. Component of the cuticle of migratory locust which contains more than 100 different structural proteins. This chain is Cuticle protein 6.4, found in Locusta migratoria (Migratory locust).